An 89-amino-acid chain; its full sequence is Small ribosomal subunit protein uS15 (89 aa).

This sequence belongs to the universal ribosomal protein uS15 family. As to quaternary structure, part of the 30S ribosomal subunit. Forms a bridge to the 50S subunit in the 70S ribosome, contacting the 23S rRNA.

In terms of biological role, one of the primary rRNA binding proteins, it binds directly to 16S rRNA where it helps nucleate assembly of the platform of the 30S subunit by binding and bridging several RNA helices of the 16S rRNA. Forms an intersubunit bridge (bridge B4) with the 23S rRNA of the 50S subunit in the ribosome. The sequence is that of Small ribosomal subunit protein uS15 from Thermus thermophilus (strain ATCC BAA-163 / DSM 7039 / HB27).